A 65-amino-acid chain; its full sequence is Weak toxin CM-11 (65 aa).

Cystine bridges form between cysteine 3–cysteine 24, cysteine 6–cysteine 11, cysteine 17–cysteine 42, cysteine 46–cysteine 57, and cysteine 58–cysteine 63.

The protein belongs to the three-finger toxin family. Ancestral subfamily. Orphan group II sub-subfamily. Expressed by the venom gland.

The protein resides in the secreted. Functionally, binds with low affinity to muscular (alpha-1-beta-1-delta-epsilon/CHRNA1-CHRNB1-CHRND-CHRNE) and very low affinity to neuronal (alpha-7/CHRNA7) nicotinic acetylcholine receptor (nAChR). The chain is Weak toxin CM-11 from Naja haje haje (Egyptian cobra).